We begin with the raw amino-acid sequence, 20 residues long: ELPVNFYALNLTADNINIGY.

It localises to the secreted. Its subcellular location is the cell wall. The protein is 35 kDa cell wall protein of Phaseolus vulgaris (Kidney bean).